The chain runs to 406 residues: Lysine-specific demethylase 8 (406 aa).

The segment covering 143–152 (KAERSEEPFS) has biased composition (basic and acidic residues). The segment at 143–162 (KAERSEEPFSKKRKHDCKSE) is disordered. The JmjC domain maps to 270–406 (DQVPELKEDI…LSFSVSFWWS (137 aa)). The Fe cation site is built by histidine 311 and aspartate 313.

Fe(2+) is required as a cofactor.

The protein localises to the nucleus. It catalyses the reaction N(6),N(6)-dimethyl-L-lysyl(36)-[histone H3] + 2 2-oxoglutarate + 2 O2 = L-lysyl(36)-[histone H3] + 2 formaldehyde + 2 succinate + 2 CO2. In terms of biological role, histone demethylase required for G2/M phase cell cycle progression. Specifically demethylates dimethylated 'Lys-36' (H3K36me2) of histone H3, an epigenetic repressive mark, thereby acting as a transcription activator. May play a role in the regulation of the circadian clock. In Danio rerio (Zebrafish), this protein is Lysine-specific demethylase 8 (kdm8).